A 213-amino-acid chain; its full sequence is Protein Syd (213 aa).

The protein belongs to the Syd family.

It is found in the cell inner membrane. In terms of biological role, interacts with the SecY protein in vivo. May bind preferentially to an uncomplexed state of SecY, thus functioning either as a chelating agent for excess SecY in the cell or as a regulatory factor that negatively controls the translocase function. The sequence is that of Protein Syd from Shewanella pealeana (strain ATCC 700345 / ANG-SQ1).